A 177-amino-acid chain; its full sequence is Peptide deformylase (177 aa).

The Fe cation site is built by Cys-99 and His-141. Glu-142 is a catalytic residue. Residue His-145 participates in Fe cation binding.

The protein belongs to the polypeptide deformylase family. Fe(2+) is required as a cofactor.

It catalyses the reaction N-terminal N-formyl-L-methionyl-[peptide] + H2O = N-terminal L-methionyl-[peptide] + formate. In terms of biological role, removes the formyl group from the N-terminal Met of newly synthesized proteins. Requires at least a dipeptide for an efficient rate of reaction. N-terminal L-methionine is a prerequisite for activity but the enzyme has broad specificity at other positions. In Rhizorhabdus wittichii (strain DSM 6014 / CCUG 31198 / JCM 15750 / NBRC 105917 / EY 4224 / RW1) (Sphingomonas wittichii), this protein is Peptide deformylase.